Here is a 1205-residue protein sequence, read N- to C-terminus: Nitric oxide synthase 3 (1205 aa).

The interval 1–73 is disordered; the sequence is MGNLKSVGQE…PPEGPKFPRV (73 aa). G2 is lipidated: N-myristoyl glycine. 2 S-palmitoyl cysteine lipidation sites follow: C15 and C26. A compositionally biased stretch (gly residues) spans 15–27; that stretch reads CGLGLGLGLGLCG. A compositionally biased stretch (pro residues) spans 33–47; it reads SPAPEPSRAPAPATP. Zn(2+)-binding residues include C96 and C101. The interaction with NOSIP stretch occupies residues 100–488; it reads CCLGSLVLPR…PDPWKGSATK (389 aa). S104 serves as a coordination point for (6R)-L-erythro-5,6,7,8-tetrahydrobiopterin. Position 116 is a phosphoserine; by CDK5 (S116). C186 provides a ligand contact to heme b. Residues Q249, W358, Y359, E363, and N368 each coordinate L-arginine. (6R)-L-erythro-5,6,7,8-tetrahydrobiopterin-binding residues include A448, W449, and F462. Residue Y477 coordinates heme b. The interval 492–512 is calmodulin-binding; sequence ITRKKTFKEVANAVKISASLM. T497 carries the phosphothreonine; by AMPK and PKA modification. In terms of domain architecture, Flavodoxin-like spans 522–705; sequence ATILYASETG…AFRGWAKAAF (184 aa). Positions 528, 529, 530, 532, 574, and 575 each coordinate FMN. Residues S617, S635, and S640 each carry the phosphoserine modification. FMN is bound by residues S656, C663, E689, and Q693. The region spanning 758–1004 is the FAD-binding FR-type domain; sequence RKMFQATVLS…IRGAPSFRLP (247 aa). R778 is an NADP(+) binding site. H800 serves as a coordination point for FAD. A disordered region spans residues 820–847; that stretch reads EDPPPPTESVAVEQLEKGSPGGPPPSWV. The residue at position 838 (S838) is a Phosphoserine. R940, Y942, S943, T958, A960, Y964, V977, C978, and S979 together coordinate FAD. NADP(+) contacts are provided by T1018, R1051, S1080, R1081, K1087, Y1089, and Q1091. At T1177 the chain carries Phosphothreonine. A Phosphoserine; by AMPK, PDPK1 and PKA modification is found at S1179. S1181 is subject to Phosphoserine.

It belongs to the NOS family. Homodimer. Interacts with NOSIP and NOSTRIN. Interacts with HSP90AB1. Forms a complex with ASL, ASS1 and SLC7A1; the complex regulates cell-autonomous L-arginine synthesis and citrulline recycling while channeling extracellular L-arginine to nitric oxide synthesis pathway. The cofactor is heme b. FAD is required as a cofactor. Requires FMN as cofactor. (6R)-L-erythro-5,6,7,8-tetrahydrobiopterin serves as cofactor. Phosphorylation by AMPK at Ser-1179 in the presence of Ca(2+)-calmodulin (CaM) activates activity. In absence of Ca(2+)-calmodulin, AMPK also phosphorylates Thr-497, resulting in inhibition of activity. Phosphorylation of Ser-116 by CDK5 reduces activity.

The protein localises to the cell membrane. Its subcellular location is the membrane. It is found in the caveola. It localises to the cytoplasm. The protein resides in the cytoskeleton. The protein localises to the golgi apparatus. The catalysed reaction is 2 L-arginine + 3 NADPH + 4 O2 + H(+) = 2 L-citrulline + 2 nitric oxide + 3 NADP(+) + 4 H2O. With respect to regulation, stimulated by calcium/calmodulin. Inhibited by NOSIP and NOSTRIN. Functionally, produces nitric oxide (NO) which is implicated in vascular smooth muscle relaxation through a cGMP-mediated signal transduction pathway. NO mediates vascular endothelial growth factor (VEGF)-induced angiogenesis in coronary vessels and promotes blood clotting through the activation of platelets. The protein is Nitric oxide synthase 3 (NOS3) of Bos taurus (Bovine).